We begin with the raw amino-acid sequence, 249 residues long: Aliphatic sulfonates import ATP-binding protein SsuB 2 (249 aa).

Positions 5 to 233 (LDLLEIRKAY…PRDRRAVELA (229 aa)) constitute an ABC transporter domain. 37 to 44 (GPSGCGKS) contacts ATP.

The protein belongs to the ABC transporter superfamily. Aliphatic sulfonates importer (TC 3.A.1.17.2) family. In terms of assembly, the complex is composed of two ATP-binding proteins (SsuB), two transmembrane proteins (SsuC) and a solute-binding protein (SsuA).

It is found in the cell inner membrane. It carries out the reaction ATP + H2O + aliphatic sulfonate-[sulfonate-binding protein]Side 1 = ADP + phosphate + aliphatic sulfonateSide 2 + [sulfonate-binding protein]Side 1.. In terms of biological role, part of the ABC transporter complex SsuABC involved in aliphatic sulfonates import. Responsible for energy coupling to the transport system. This is Aliphatic sulfonates import ATP-binding protein SsuB 2 from Pseudomonas aeruginosa (strain ATCC 15692 / DSM 22644 / CIP 104116 / JCM 14847 / LMG 12228 / 1C / PRS 101 / PAO1).